Consider the following 261-residue polypeptide: Acetoacetate decarboxylase 2 (261 aa).

Lys116 functions as the Schiff-base intermediate with acetoacetate in the catalytic mechanism.

The protein belongs to the ADC family.

The enzyme catalyses acetoacetate + H(+) = acetone + CO2. In terms of biological role, catalyzes the conversion of acetoacetate to acetone and carbon dioxide. The sequence is that of Acetoacetate decarboxylase 2 from Mesorhizobium japonicum (strain LMG 29417 / CECT 9101 / MAFF 303099) (Mesorhizobium loti (strain MAFF 303099)).